The chain runs to 371 residues: Forkhead box protein J1.2 (371 aa).

Disordered regions lie at residues 45-74 (ANSR…APRT) and 80-99 (VAVP…PVQE). A DNA-binding region (fork-head) is located at residues 109-203 (KPPYSYATLI…VNGVLKRRRM (95 aa)). The disordered stretch occupies residues 228 to 248 (PSSHHMQHISGGHRQSRRYEK).

Belongs to the FOXJ1 family. As to expression, expressed diffusely through much of gastrula and neurula stage embryos. At stage 23 (late neurula), limited to the otic vesicle. By stage 28 (tailbud), also expressed transiently in the presumptive nephrostomes of the pronephros. At stage 35 (early tadpole), expressed broadly in the head and strongly expressed in the developing gill structures.

The protein localises to the nucleus. Its function is as follows. Key transcription factor required for motile ciliogenesis. Activates genes essential for motile cilia formation and function. In Xenopus tropicalis (Western clawed frog), this protein is Forkhead box protein J1.2.